The primary structure comprises 113 residues: Beta-microseminoprotein A1 (113 aa).

A signal peptide spans 1–20; sequence MNVLLGGLVIFATFVTLCNG. 5 disulfide bridges follow: C22–C70, C38–C62, C57–C93, C60–C69, and C84–C107.

The protein belongs to the beta-microseminoprotein family.

Its subcellular location is the secreted. The chain is Beta-microseminoprotein A1 (MSPA) from Saguinus oedipus (Cotton-top tamarin).